Here is a 182-residue protein sequence, read N- to C-terminus: Trypsin inhibitor 2 (182 aa).

Gln-1 is modified (pyrrolidone carboxylic acid). Intrachain disulfides connect Cys-40–Cys-84 and Cys-136–Cys-147.

This sequence belongs to the protease inhibitor I3 (leguminous Kunitz-type inhibitor) family.

The chain is Trypsin inhibitor 2 from Psophocarpus tetragonolobus (Winged bean).